The sequence spans 68 residues: Large ribosomal subunit protein uL29 (68 aa).

It belongs to the universal ribosomal protein uL29 family.

The protein is Large ribosomal subunit protein uL29 of Chlorobaculum tepidum (strain ATCC 49652 / DSM 12025 / NBRC 103806 / TLS) (Chlorobium tepidum).